A 702-amino-acid chain; its full sequence is Elongation factor G 2 (702 aa).

In terms of domain architecture, tr-type G spans 8–290; the sequence is ERYRNIGISA…AVIDYLPSPV (283 aa). Residues 17-24, 88-92, and 142-145 contribute to the GTP site; these read AHIDAGKT, DTPGH, and NKMD.

It belongs to the TRAFAC class translation factor GTPase superfamily. Classic translation factor GTPase family. EF-G/EF-2 subfamily.

The protein resides in the cytoplasm. In terms of biological role, catalyzes the GTP-dependent ribosomal translocation step during translation elongation. During this step, the ribosome changes from the pre-translocational (PRE) to the post-translocational (POST) state as the newly formed A-site-bound peptidyl-tRNA and P-site-bound deacylated tRNA move to the P and E sites, respectively. Catalyzes the coordinated movement of the two tRNA molecules, the mRNA and conformational changes in the ribosome. This Cupriavidus metallidurans (strain ATCC 43123 / DSM 2839 / NBRC 102507 / CH34) (Ralstonia metallidurans) protein is Elongation factor G 2.